The sequence spans 471 residues: Proton-coupled amino acid transporter-like protein pathetic (471 aa).

Asparagine 61 carries N-linked (GlcNAc...) asparagine glycosylation. 10 consecutive transmembrane segments (helical) span residues 81–101 (FAFM…TAFI), 153–173 (ILFG…VIVA), 187–207 (AVSL…IAWV), 216–236 (VSMV…YYLV), 253–273 (LPQF…VMPL), 283–303 (FLGI…IYML), 337–357 (LISL…LEII), 375–395 (VLRT…PTIG), 397–417 (FMGL…PVVI), and 432–452 (WILW…VFGT).

This sequence belongs to the amino acid/polyamine transporter 2 family. In terms of tissue distribution, in third instar larvae, expressed at highest levels in the brain and digestive system with particularly high levels in surface glia of the brain (at protein level). In third instar larvae, expressed in all cells of the body wall (at protein level). Within the body wall of third instar larvae, most highly expressed in epithelial cells and sensory neurons. Expressed at a similar level in all da neurons (at protein level). Widely expressed during embryonic and late larval stages. Levels are highly dynamic in embryogenesis with surges of expression in many structures, including muscle primordia, salivary glands, proventriculus, trachea and gonads. Expressed in all or most cells of larval imaginal disks. Expression is also particularly strong in the pouch and hinge regions of the wing disk and in the morphogenetic furrow of the eye disk.

It localises to the cell membrane. Its subcellular location is the lysosome membrane. It is found in the late endosome membrane. The protein resides in the cell projection. The protein localises to the axon. It localises to the dendrite. Its subcellular location is the perikaryon. It is found in the cytoplasm. Functionally, amino acid transporter which has pH-dependent electrogenic transport activity for alanine and glycine but not for proline. Plays a role in positive regulation of growth by directly or indirectly modulating the effects of the TOR signaling pathway. Required in a cell-autonomous manner for dendrite growth in neurons with large dendrite arbors. This Drosophila melanogaster (Fruit fly) protein is Proton-coupled amino acid transporter-like protein pathetic.